A 196-amino-acid polypeptide reads, in one-letter code: MGSRSSHIALIPDVEHIRRETGFSQASLLRLYHRFQALDRDEKGFLSRLDLQQIGALAVNPLGDRIIDSFFPNGSQRLYFAGFARVLAYFRPIDEEDATLRDPKQPEPLNSRMNKLRFAFQLYDLDRDGKISRNEMLQVLRLMVGVQVTDEQLESITDRTVQEADEDGDGAVSFLEFTKSLEKMNIEQKMSIRILK.

G2 is lipidated: N-myristoyl glycine. EF-hand domains follow at residues 26-61 (ASLL…AVNP), 71-106 (FPNG…PKQP), 111-146 (SRMN…MVGV), and 152-187 (QLES…MNIE). Residue S27 is modified to Phosphoserine. Ca(2+) is bound by residues D124, D126, D128, K130, and E135. The short motif at 137 to 148 (LQVLRLMVGVQV) is the Nuclear export signal element. The Ca(2+) site is built by D165, D167, D169, and E176.

This sequence belongs to the calcineurin regulatory subunit family. CHP subfamily. In terms of assembly, interacts with PPP3CA. Interacts with SLC9A1/NHE1; the interaction occurs in a calcium-dependent manner. Interacts with SLC9A1/NHE1.

The protein resides in the cytoplasm. It is found in the nucleus. It localises to the cell membrane. Functionally, functions as an integral cofactor in cell pH regulation by controlling plasma membrane-type Na(+)/H(+) exchange activity. Binds to and activates SLC9A1/NHE1 in a serum-independent manner, thus increasing pH and protecting cells from serum deprivation-induced death. Also plays a role in the regulation of cell proliferation and tumor growth by increasing the phosphatase activity of PPP3CA in a calcium-dependent manner. Activator of the calcineurin/NFAT signaling pathway. Involved in the cytoplasmic translocation of the transcription factor NFATC3 to the nucleus. This Mus musculus (Mouse) protein is Calcineurin B homologous protein 2 (Chp2).